The following is a 144-amino-acid chain: Large ribosomal subunit protein uL15 (144 aa).

Positions M1–G53 are disordered. Positions R21–S31 are enriched in gly residues.

This sequence belongs to the universal ribosomal protein uL15 family. As to quaternary structure, part of the 50S ribosomal subunit.

Functionally, binds to the 23S rRNA. This is Large ribosomal subunit protein uL15 from Histophilus somni (strain 129Pt) (Haemophilus somnus).